We begin with the raw amino-acid sequence, 952 residues long: Alpha-L-rhamnosidase (952 aa).

The first 21 residues, 1–21 (MKYNKLLFSLLLLAVFCFSCK), serve as a signal peptide directing secretion. Residues aspartate 520, 524–525 (RE), aspartate 532, and tryptophan 594 contribute to the alpha-L-rhamnose site. The active-site Proton donor is the glutamate 525. Residue glutamate 809 is the Proton acceptor of the active site. Alpha-L-rhamnose is bound at residue histidine 826.

This sequence belongs to the glycosyl hydrolase 78 family.

It is found in the cell membrane. It carries out the reaction Hydrolysis of terminal non-reducing alpha-L-rhamnose residues in alpha-L-rhamnosides.. Its function is as follows. Alpha-L-rhamnosidase that may be involved in ulvan degradation. Ulvan is the main polysaccharide component of the Ulvales (green seaweed) cell wall. It is composed of disaccharide building blocks comprising 3-sulfated rhamnose (Rha3S) linked to D-glucuronic acid (GlcA), L-iduronic acid (IduA), or D-xylose (Xyl). The polypeptide is Alpha-L-rhamnosidase (Formosa agariphila (strain DSM 15362 / KCTC 12365 / LMG 23005 / KMM 3901 / M-2Alg 35-1)).